The sequence spans 171 residues: NADH-quinone oxidoreductase subunit B (171 aa).

Residues C34, C35, C99, and C128 each contribute to the [4Fe-4S] cluster site.

Belongs to the complex I 20 kDa subunit family. As to quaternary structure, NDH-1 is composed of 14 different subunits. Subunits NuoB, C, D, E, F, and G constitute the peripheral sector of the complex. [4Fe-4S] cluster serves as cofactor.

It localises to the cell inner membrane. The catalysed reaction is a quinone + NADH + 5 H(+)(in) = a quinol + NAD(+) + 4 H(+)(out). Functionally, NDH-1 shuttles electrons from NADH, via FMN and iron-sulfur (Fe-S) centers, to quinones in the respiratory chain. The immediate electron acceptor for the enzyme in this species is believed to be ubiquinone. Couples the redox reaction to proton translocation (for every two electrons transferred, four hydrogen ions are translocated across the cytoplasmic membrane), and thus conserves the redox energy in a proton gradient. This is NADH-quinone oxidoreductase subunit B from Sulfurihydrogenibium sp. (strain YO3AOP1).